The sequence spans 494 residues: Amidophosphoribosyltransferase (494 aa).

A propeptide spanning residues 1-10 (MFNYSGLNEE) is cleaved from the precursor. Residue Cys-11 is the Nucleophile of the active site. The 221-residue stretch at 11-231 (CGVFGIWNHP…AGEYVVINDK (221 aa)) folds into the Glutamine amidotransferase type-2 domain. The Mg(2+) site is built by Ser-294, Asp-356, and Asp-357.

It in the C-terminal section; belongs to the purine/pyrimidine phosphoribosyltransferase family. Mg(2+) is required as a cofactor.

It carries out the reaction 5-phospho-beta-D-ribosylamine + L-glutamate + diphosphate = 5-phospho-alpha-D-ribose 1-diphosphate + L-glutamine + H2O. It functions in the pathway purine metabolism; IMP biosynthesis via de novo pathway; N(1)-(5-phospho-D-ribosyl)glycinamide from 5-phospho-alpha-D-ribose 1-diphosphate: step 1/2. Functionally, catalyzes the formation of phosphoribosylamine from phosphoribosylpyrophosphate (PRPP) and glutamine. The sequence is that of Amidophosphoribosyltransferase from Staphylococcus aureus (strain Mu50 / ATCC 700699).